The sequence spans 267 residues: NAD kinase 2 (267 aa).

The active-site Proton acceptor is D52. NAD(+)-binding positions include 52–53, 124–125, R151, D153, 164–169, and A188; these read DA, NE, and TAYNKS.

This sequence belongs to the NAD kinase family. Requires a divalent metal cation as cofactor.

The protein resides in the cytoplasm. The enzyme catalyses NAD(+) + ATP = ADP + NADP(+) + H(+). Involved in the regulation of the intracellular balance of NAD and NADP, and is a key enzyme in the biosynthesis of NADP. Catalyzes specifically the phosphorylation on 2'-hydroxyl of the adenosine moiety of NAD to yield NADP. The polypeptide is NAD kinase 2 (Bacillus cereus (strain ATCC 14579 / DSM 31 / CCUG 7414 / JCM 2152 / NBRC 15305 / NCIMB 9373 / NCTC 2599 / NRRL B-3711)).